The sequence spans 309 residues: 4-hydroxy-3-methylbut-2-enyl diphosphate reductase (309 aa).

Cys12 provides a ligand contact to [4Fe-4S] cluster. His43 and His77 together coordinate (2E)-4-hydroxy-3-methylbut-2-enyl diphosphate. Dimethylallyl diphosphate is bound by residues His43 and His77. Isopentenyl diphosphate-binding residues include His43 and His77. Position 99 (Cys99) interacts with [4Fe-4S] cluster. His127 serves as a coordination point for (2E)-4-hydroxy-3-methylbut-2-enyl diphosphate. Residue His127 coordinates dimethylallyl diphosphate. His127 provides a ligand contact to isopentenyl diphosphate. Glu129 (proton donor) is an active-site residue. Thr167 serves as a coordination point for (2E)-4-hydroxy-3-methylbut-2-enyl diphosphate. Position 197 (Cys197) interacts with [4Fe-4S] cluster. Ser225, Ser226, Asn227, and Ser269 together coordinate (2E)-4-hydroxy-3-methylbut-2-enyl diphosphate. Dimethylallyl diphosphate is bound by residues Ser225, Ser226, Asn227, and Ser269. Residues Ser225, Ser226, Asn227, and Ser269 each contribute to the isopentenyl diphosphate site.

Belongs to the IspH family. Requires [4Fe-4S] cluster as cofactor.

It catalyses the reaction isopentenyl diphosphate + 2 oxidized [2Fe-2S]-[ferredoxin] + H2O = (2E)-4-hydroxy-3-methylbut-2-enyl diphosphate + 2 reduced [2Fe-2S]-[ferredoxin] + 2 H(+). The enzyme catalyses dimethylallyl diphosphate + 2 oxidized [2Fe-2S]-[ferredoxin] + H2O = (2E)-4-hydroxy-3-methylbut-2-enyl diphosphate + 2 reduced [2Fe-2S]-[ferredoxin] + 2 H(+). It participates in isoprenoid biosynthesis; dimethylallyl diphosphate biosynthesis; dimethylallyl diphosphate from (2E)-4-hydroxy-3-methylbutenyl diphosphate: step 1/1. The protein operates within isoprenoid biosynthesis; isopentenyl diphosphate biosynthesis via DXP pathway; isopentenyl diphosphate from 1-deoxy-D-xylulose 5-phosphate: step 6/6. Functionally, catalyzes the conversion of 1-hydroxy-2-methyl-2-(E)-butenyl 4-diphosphate (HMBPP) into a mixture of isopentenyl diphosphate (IPP) and dimethylallyl diphosphate (DMAPP). Acts in the terminal step of the DOXP/MEP pathway for isoprenoid precursor biosynthesis. In Wolbachia sp. subsp. Brugia malayi (strain TRS), this protein is 4-hydroxy-3-methylbut-2-enyl diphosphate reductase.